The following is a 291-amino-acid chain: Small ribosomal subunit protein uS2 (291 aa).

The protein belongs to the universal ribosomal protein uS2 family.

The polypeptide is Small ribosomal subunit protein uS2 (Lawsonia intracellularis (strain PHE/MN1-00)).